Consider the following 38-residue polypeptide: MTGPNPNKQAVELNRTSLYWGLLLIFVLAVLFSSYFFN.

Residues 17–37 (SLYWGLLLIFVLAVLFSSYFF) traverse the membrane as a helical segment.

It belongs to the PsbL family. PSII is composed of 1 copy each of membrane proteins PsbA, PsbB, PsbC, PsbD, PsbE, PsbF, PsbH, PsbI, PsbJ, PsbK, PsbL, PsbM, PsbT, PsbX, PsbY, PsbZ, Psb30/Ycf12, at least 3 peripheral proteins of the oxygen-evolving complex and a large number of cofactors. It forms dimeric complexes.

The protein localises to the plastid. It is found in the chloroplast thylakoid membrane. Its function is as follows. One of the components of the core complex of photosystem II (PSII). PSII is a light-driven water:plastoquinone oxidoreductase that uses light energy to abstract electrons from H(2)O, generating O(2) and a proton gradient subsequently used for ATP formation. It consists of a core antenna complex that captures photons, and an electron transfer chain that converts photonic excitation into a charge separation. This subunit is found at the monomer-monomer interface and is required for correct PSII assembly and/or dimerization. In Thalassiosira pseudonana (Marine diatom), this protein is Photosystem II reaction center protein L.